Reading from the N-terminus, the 170-residue chain is Transcriptional repressor NrdR (170 aa).

A zinc finger spans residues 3 to 34 (CPFCRHPDSRVVDSRVTDDGTAIRRRRSCPEC). Residues 46–136 (LSVIKRSGVI…VYRGFESLED (91 aa)) enclose the ATP-cone domain. Positions 151–170 (ERSETVERGRPVPSRGVDDR) are disordered.

This sequence belongs to the NrdR family. The cofactor is Zn(2+).

Negatively regulates transcription of bacterial ribonucleotide reductase nrd genes and operons by binding to NrdR-boxes. The protein is Transcriptional repressor NrdR of Acidothermus cellulolyticus (strain ATCC 43068 / DSM 8971 / 11B).